The primary structure comprises 325 residues: Tetraacyldisaccharide 4'-kinase (325 aa).

54–61 is a binding site for ATP; sequence SVGGTGKT.

Belongs to the LpxK family.

The enzyme catalyses a lipid A disaccharide + ATP = a lipid IVA + ADP + H(+). Its pathway is glycolipid biosynthesis; lipid IV(A) biosynthesis; lipid IV(A) from (3R)-3-hydroxytetradecanoyl-[acyl-carrier-protein] and UDP-N-acetyl-alpha-D-glucosamine: step 6/6. Its function is as follows. Transfers the gamma-phosphate of ATP to the 4'-position of a tetraacyldisaccharide 1-phosphate intermediate (termed DS-1-P) to form tetraacyldisaccharide 1,4'-bis-phosphate (lipid IVA). In Rickettsia akari (strain Hartford), this protein is Tetraacyldisaccharide 4'-kinase.